The primary structure comprises 173 residues: Shikimate kinase 1 (173 aa).

14-19 (GAGKST) is an ATP binding site. Serine 18 lines the Mg(2+) pocket. Substrate contacts are provided by aspartate 36, arginine 60, and glycine 82. Arginine 120 contacts ATP. Position 140 (arginine 140) interacts with substrate. Glutamine 157 lines the ATP pocket.

Belongs to the shikimate kinase family. In terms of assembly, monomer. Mg(2+) serves as cofactor.

It is found in the cytoplasm. The catalysed reaction is shikimate + ATP = 3-phosphoshikimate + ADP + H(+). It functions in the pathway metabolic intermediate biosynthesis; chorismate biosynthesis; chorismate from D-erythrose 4-phosphate and phosphoenolpyruvate: step 5/7. Its function is as follows. Catalyzes the specific phosphorylation of the 3-hydroxyl group of shikimic acid using ATP as a cosubstrate. The protein is Shikimate kinase 1 of Erwinia tasmaniensis (strain DSM 17950 / CFBP 7177 / CIP 109463 / NCPPB 4357 / Et1/99).